We begin with the raw amino-acid sequence, 492 residues long: 3-octaprenyl-4-hydroxybenzoate carboxy-lyase (492 aa).

Asn172 is a binding site for Mn(2+). Prenylated FMN-binding positions include 175-177, 189-191, and 194-195; these read IYR, RWL, and RG. Glu238 provides a ligand contact to Mn(2+). Catalysis depends on Asp287, which acts as the Proton donor.

This sequence belongs to the UbiD family. As to quaternary structure, homohexamer. The cofactor is prenylated FMN. It depends on Mn(2+) as a cofactor.

It is found in the cell membrane. The catalysed reaction is a 4-hydroxy-3-(all-trans-polyprenyl)benzoate + H(+) = a 2-(all-trans-polyprenyl)phenol + CO2. It participates in cofactor biosynthesis; ubiquinone biosynthesis. Functionally, catalyzes the decarboxylation of 3-octaprenyl-4-hydroxy benzoate to 2-octaprenylphenol, an intermediate step in ubiquinone biosynthesis. This chain is 3-octaprenyl-4-hydroxybenzoate carboxy-lyase, found in Pasteurella multocida (strain Pm70).